A 268-amino-acid chain; its full sequence is Indole-3-glycerol phosphate synthase (268 aa).

The protein belongs to the TrpC family.

The catalysed reaction is 1-(2-carboxyphenylamino)-1-deoxy-D-ribulose 5-phosphate + H(+) = (1S,2R)-1-C-(indol-3-yl)glycerol 3-phosphate + CO2 + H2O. It participates in amino-acid biosynthesis; L-tryptophan biosynthesis; L-tryptophan from chorismate: step 4/5. The chain is Indole-3-glycerol phosphate synthase from Acinetobacter baumannii (strain ACICU).